A 503-amino-acid chain; its full sequence is Na(+)-translocating NADH-quinone reductase subunit B (503 aa).

3 helical membrane passes run 55–75 (MMLV…NSGL), 120–142 (IFLP…FAII), and 160–180 (LILP…FGVV). Position 248 is an FMN phosphoryl threonine (T248). The next 5 helical transmembrane spans lie at 361–381 (TSTV…IASW), 384–404 (MLSF…MSIL), 417–437 (FFIP…LVFM), 452–472 (WLYG…NPAY), and 475–495 (GVML…NIAL).

The protein belongs to the NqrB/RnfD family. In terms of assembly, composed of six subunits; NqrA, NqrB, NqrC, NqrD, NqrE and NqrF. It depends on FMN as a cofactor.

The protein localises to the cell inner membrane. The catalysed reaction is a ubiquinone + n Na(+)(in) + NADH + H(+) = a ubiquinol + n Na(+)(out) + NAD(+). NQR complex catalyzes the reduction of ubiquinone-1 to ubiquinol by two successive reactions, coupled with the transport of Na(+) ions from the cytoplasm to the periplasm. NqrA to NqrE are probably involved in the second step, the conversion of ubisemiquinone to ubiquinol. This Chlamydia trachomatis serovar A (strain ATCC VR-571B / DSM 19440 / HAR-13) protein is Na(+)-translocating NADH-quinone reductase subunit B.